Consider the following 246-residue polypeptide: Myogenic factor 5 (246 aa).

Residues 1-38 form a disordered region; that stretch reads RVRARIPGLSSPEGEFPEDFEPRELPPFGAPAPTEPAC. One can recognise a bHLH domain in the interval 73-124; the sequence is DRRKAATMRERRRLKKVNQAFETLKRCTTANPNQRLPKVEILRNAIRYIESL. A disordered region spans residues 210-246; it reads EEPGLPLRHAGSLSPGASIDSGARTPGSPPPRTYQAL. Residues 236–246 are compositionally biased toward pro residues; sequence GSPPPRTYQAL.

Efficient DNA binding requires dimerization with another bHLH protein.

The protein resides in the nucleus. Functionally, acts as a transcriptional activator that promotes transcription of muscle-specific target genes and plays a role in muscle differentiation. Induces fibroblasts to differentiate into myoblasts. Probable sequence specific DNA-binding protein. The chain is Myogenic factor 5 (MYF5) from Coturnix japonica (Japanese quail).